The primary structure comprises 81 residues: 8.6 kDa transglutaminase substrate (81 aa).

Multimeric. As to expression, hemolymph; Hemocyte.

The protein is 8.6 kDa transglutaminase substrate of Tachypleus tridentatus (Japanese horseshoe crab).